We begin with the raw amino-acid sequence, 155 residues long: Endoribonuclease YbeY (155 aa).

Positions 116, 120, and 126 each coordinate Zn(2+).

The protein belongs to the endoribonuclease YbeY family. Requires Zn(2+) as cofactor.

Its subcellular location is the cytoplasm. Functionally, single strand-specific metallo-endoribonuclease involved in late-stage 70S ribosome quality control and in maturation of the 3' terminus of the 16S rRNA. This is Endoribonuclease YbeY from Thermobifida fusca (strain YX).